The chain runs to 226 residues: MSIRAIIVDTAGTTTDLNFIQDVLFPYSRKAMAEFLEQNQHNVVVDYCISDVKDIALEPDATLERVTEILQQWIDEDRKLTPLKTLQGLIWKQGYNRVEFTGHIYPDFIDSIERIKEKGIRIYSFSSGSVEAQKLLFSHTEAGDLTGSFNGHFDTRTGNKLDKQAYCNICNTISLKPKQILFVSDVAEELKAAEAAGMTTCQMIRFADQRQAKCKKISSFSELVFD.

This sequence belongs to the HAD-like hydrolase superfamily. MasA/MtnC family. Monomer. Requires Mg(2+) as cofactor.

It catalyses the reaction 5-methylsulfanyl-2,3-dioxopentyl phosphate + H2O = 1,2-dihydroxy-5-(methylsulfanyl)pent-1-en-3-one + phosphate. Its pathway is amino-acid biosynthesis; L-methionine biosynthesis via salvage pathway; L-methionine from S-methyl-5-thio-alpha-D-ribose 1-phosphate: step 3/6. It functions in the pathway amino-acid biosynthesis; L-methionine biosynthesis via salvage pathway; L-methionine from S-methyl-5-thio-alpha-D-ribose 1-phosphate: step 4/6. Functionally, bifunctional enzyme that catalyzes the enolization of 2,3-diketo-5-methylthiopentyl-1-phosphate (DK-MTP-1-P) into the intermediate 2-hydroxy-3-keto-5-methylthiopentenyl-1-phosphate (HK-MTPenyl-1-P), which is then dephosphorylated to form the acireductone 1,2-dihydroxy-3-keto-5-methylthiopentene (DHK-MTPene). The chain is Enolase-phosphatase E1 from Shewanella frigidimarina (strain NCIMB 400).